Here is a 117-residue protein sequence, read N- to C-terminus: Non-specific lipid-transfer protein (117 aa).

The first 26 residues, methionine 1–alanine 26, serve as a signal peptide directing secretion. Intrachain disulfides connect cysteine 30/cysteine 76, cysteine 40/cysteine 53, cysteine 54/cysteine 99, and cysteine 74/cysteine 113.

It belongs to the plant LTP family.

In terms of biological role, plant non-specific lipid-transfer proteins transfer phospholipids as well as galactolipids across membranes. May play a role in wax or cutin deposition in the cell walls of expanding epidermal cells and certain secretory tissues. In Spinacia oleracea (Spinach), this protein is Non-specific lipid-transfer protein.